The chain runs to 370 residues: NSFL1 cofactor p47 (370 aa).

The span at 54 to 73 shows a compositional bias: polar residues; that stretch reads SQATPSSVSRGTAPSDNRVT. The tract at residues 54–116 is disordered; sequence SQATPSSVSR…VGPPRKKSPN (63 aa). A phosphoserine mark is found at serine 74, serine 102, serine 114, and serine 140. The short motif at 109–115 is the Nuclear localization signal element; that stretch reads PPRKKSP. Tyrosine 167 is modified (phosphotyrosine). The Nuclear localization signal signature appears at 172–175; it reads KRQH. Phosphoserine occurs at positions 176, 192, and 272. The SEP domain maps to 179–244; it reads DVHVVLKLWK…MEDHRDEDFV (66 aa). A compositionally biased stretch (polar residues) spans 261–287; that stretch reads GSTAPQVLSTSSPAQQAENEAKASSSI. Residues 261 to 289 are disordered; the sequence is GSTAPQVLSTSSPAQQAENEAKASSSILI. The region spanning 291–368 is the UBX domain; it reads ESEPTTNIQI…NLLNAVIVQR (78 aa).

This sequence belongs to the NSFL1C family. In terms of assembly, part of a ternary complex containing STX5A, NSFL1C and VCP. NSFL1C forms a homotrimer that binds to one end of a VCP homohexamer. The complex binds to membranes enriched in phosphatidylethanolamine-containing lipids and promotes Golgi membrane fusion. Interaction with VCIP135 leads to dissociation of the complex via ATP hydrolysis by VCP. Binds ubiquitin and mono-ubiquitinated proteins via its N-terminal UBA-like domain when bound to VCP. Phosphorylated during mitosis. Phosphorylation inhibits interaction with Golgi membranes and is required for the fragmentation of the Golgi stacks during mitosis.

It is found in the nucleus. The protein resides in the golgi apparatus. The protein localises to the golgi stack. Its subcellular location is the chromosome. It localises to the cytoplasm. It is found in the cytoskeleton. The protein resides in the microtubule organizing center. The protein localises to the centrosome. Functionally, reduces the ATPase activity of VCP. Necessary for the fragmentation of Golgi stacks during mitosis and for VCP-mediated reassembly of Golgi stacks after mitosis. May play a role in VCP-mediated formation of transitional endoplasmic reticulum (tER). Inhibits the activity of CTSL (in vitro). Together with UBXN2B/p37, regulates the centrosomal levels of kinase AURKA/Aurora A during mitotic progression by promoting AURKA removal from centrosomes in prophase. Also, regulates spindle orientation during mitosis. This is NSFL1 cofactor p47 (NSFL1C) from Homo sapiens (Human).